The primary structure comprises 563 residues: MRYIKSITQQKLSFLLAIYIGLFMNGAVFYRRFGSYAHDFTVWKGISAVVELAATVLVTFFLLRLLSLFGRRSWRILASLVVLFSAGASYYMTFLNVVIGYGIIASVMTTDIDLSKEVVGLNFILWLIAVSALPLILIWNNRCRYTLLRQLRTPGQRIRSLAVVVLAGIMVWAPIRLLDIQQKKVERATGVDLPSYGGVVANSYLPSNWLSALGLYAWARVDESSDNNSLLNPAKKFTYQAPQNVDDTYVVFIIGETTRWDHMGIFGYERNTTPKLAQEKNLAAFRGYSCDTATKLSLRCMFVRQGGAEDNPQRTLKEQNIFAVLKQLGFSSDLYAMQSEMWFYSNTMADNIAYREQIGAEPRNRGKPVDDMLLVDEMQQSLGRNPDGKHLIILHTKGSHFNYTQRYPRSFAQWKPECIGVDSGCTKAQMINSYDNSVTYVDHFISSVIDQVRDKKAIVFYAADHGESINEREHLHGTPRELAPPEQFRVPMMVWMSDKYLENPANAQAFAQLKKEADMKVPRRHVELYDTIMGCLGYTSPDGGINENNNWCHIPQAKEAAAN.

The Cytoplasmic segment spans residues 1 to 9 (MRYIKSITQ). Residues 10–30 (QKLSFLLAIYIGLFMNGAVFY) traverse the membrane as a helical segment. The Periplasmic segment spans residues 31–48 (RRFGSYAHDFTVWKGISA). The helical transmembrane segment at 49–69 (VVELAATVLVTFFLLRLLSLF) threads the bilayer. The Cytoplasmic portion of the chain corresponds to 70–79 (GRRSWRILAS). Residues 80–100 (LVVLFSAGASYYMTFLNVVIG) traverse the membrane as a helical segment. At 101-117 (YGIIASVMTTDIDLSKE) the chain is on the periplasmic side. The helical transmembrane segment at 118–138 (VVGLNFILWLIAVSALPLILI) threads the bilayer. Residues 139-159 (WNNRCRYTLLRQLRTPGQRIR) lie on the Cytoplasmic side of the membrane. A helical membrane pass occupies residues 160–180 (SLAVVVLAGIMVWAPIRLLDI). Residues 181–563 (QQKKVERATG…IPQAKEAAAN (383 aa)) lie on the Periplasmic side of the membrane.

This sequence belongs to the phosphoethanolamine transferase family. EptB subfamily. Ca(2+) serves as cofactor.

Its subcellular location is the cell inner membrane. It carries out the reaction alpha-Kdo-(2-&gt;4)-alpha-Kdo-(2-&gt;6)-lipid A (E. coli) + a 1,2-diacyl-sn-glycero-3-phosphoethanolamine = 7-O-[2-aminoethoxy(hydroxy)phosphoryl]-alpha-Kdo-(2-&gt;4)-alpha-Kdo-(2-&gt;6)-lipid A + a 1,2-diacyl-sn-glycerol. The catalysed reaction is alpha-Kdo-(2-&gt;4)-alpha-Kdo-(2-&gt;6)-lipid IVA (E. coli) + a 1,2-diacyl-sn-glycero-3-phosphoethanolamine = 7-O-[2-aminoethoxy(hydroxy)phosphoryl]-alpha-Kdo-(2-&gt;4)-alpha-Kdo-(2-&gt;6)-lipid IVA (E. coli) + a 1,2-diacyl-sn-glycerol. With respect to regulation, inhibited by calcium concentrations higher than 1 mM. Functionally, catalyzes the addition of a phosphoethanolamine (pEtN) moiety to the outer 3-deoxy-D-manno-octulosonic acid (Kdo) residue of a Kdo(2)-lipid A. Phosphatidylethanolamines with one unsaturated acyl group function as pEtN donors and the reaction releases diacylglycerol. The polypeptide is Kdo(2)-lipid A phosphoethanolamine 7''-transferase (eptB) (Escherichia coli (strain K12)).